The primary structure comprises 243 residues: Small ribosomal subunit protein uS3 (243 aa).

One can recognise a KH type-2 domain in the interval 39-110 (IRTFIQKKYS…QVRINVVEVE (72 aa)). Residues 221-243 (GAIPRRKGSRKPQQFEDRSNENS) form a disordered region. Basic and acidic residues predominate over residues 233 to 243 (QQFEDRSNENS).

This sequence belongs to the universal ribosomal protein uS3 family. Part of the 30S ribosomal subunit. Forms a tight complex with proteins S10 and S14.

Functionally, binds the lower part of the 30S subunit head. Binds mRNA in the 70S ribosome, positioning it for translation. This chain is Small ribosomal subunit protein uS3, found in Prochlorococcus marinus subsp. pastoris (strain CCMP1986 / NIES-2087 / MED4).